The following is a 130-amino-acid chain: Histone H2A.1 (130 aa).

The disordered stretch occupies residues 1-21 (MSGGKGKVGSSEKASTSRSAK). Serine 2 is modified (N-acetylserine). N6-acetyllysine occurs at positions 5 and 7. N5-methylglutamine is present on glutamine 105. Serine 127 carries the post-translational modification Phosphoserine. The short motif at 127–128 (SQ) is the [ST]-Q motif element.

It belongs to the histone H2A family. As to quaternary structure, the nucleosome is a histone octamer containing two molecules each of H2A, H2B, H3 and H4 assembled in one H3-H4 heterotetramer and two H2A-H2B heterodimers. The octamer wraps approximately 147 bp of DNA. Phosphorylated to form H2AS128ph (gamma-H2A) in response to DNA double-strand breaks (DSBs) generated by exogenous genotoxic agents and by stalled replication forks. Phosphorylation is dependent on the DNA damage checkpoint kinases MEC1/ATR and TEL1/ATM, spreads on either side of a detected DSB site and may mark the surrounding chromatin for recruitment of proteins required for DNA damage signaling and repair. Gamma-H2A is removed from the DNA prior to the strand invasion-primer extension step of the repair process and subsequently dephosphorylated. Dephosphorylation is necessary for efficient recovery from the DNA damage checkpoint. Post-translationally, acetylated by ESA1 to form H2AK4ac and H2AK7ac.

It localises to the nucleus. It is found in the chromosome. Core component of nucleosome which plays a central role in DNA double strand break (DSB) repair. Nucleosomes wrap and compact DNA into chromatin, limiting DNA accessibility to the cellular machineries which require DNA as a template. Histones thereby play a central role in transcription regulation, DNA repair, DNA replication and chromosomal stability. DNA accessibility is regulated via a complex set of post-translational modifications of histones, also called histone code, and nucleosome remodeling. This Meyerozyma guilliermondii (strain ATCC 6260 / CBS 566 / DSM 6381 / JCM 1539 / NBRC 10279 / NRRL Y-324) (Yeast) protein is Histone H2A.1 (HTA1).